The sequence spans 428 residues: UDP-N-acetylglucosamine 1-carboxyvinyltransferase (428 aa).

25 to 26 (KN) lines the phosphoenolpyruvate pocket. Position 102 (Arg102) interacts with UDP-N-acetyl-alpha-D-glucosamine. Cys126 functions as the Proton donor in the catalytic mechanism. Cys126 is subject to 2-(S-cysteinyl)pyruvic acid O-phosphothioketal. UDP-N-acetyl-alpha-D-glucosamine contacts are provided by Asp316 and Val338.

It belongs to the EPSP synthase family. MurA subfamily.

The protein resides in the cytoplasm. The catalysed reaction is phosphoenolpyruvate + UDP-N-acetyl-alpha-D-glucosamine = UDP-N-acetyl-3-O-(1-carboxyvinyl)-alpha-D-glucosamine + phosphate. It functions in the pathway cell wall biogenesis; peptidoglycan biosynthesis. In terms of biological role, cell wall formation. Adds enolpyruvyl to UDP-N-acetylglucosamine. In Anaplasma marginale (strain St. Maries), this protein is UDP-N-acetylglucosamine 1-carboxyvinyltransferase.